A 111-amino-acid polypeptide reads, in one-letter code: MSGQTFNPERLMQVILSPQISEKATFIGEKHNQIIFRVAPDATKPEVKAAVELIWKNQKVEVESVRISNVKGKEKRFGRFMGRRGGWKKAYISIKAGQEINFSEISQGEVK.

The protein belongs to the universal ribosomal protein uL23 family. Part of the 50S ribosomal subunit. Contacts protein L29, and trigger factor when it is bound to the ribosome.

Its function is as follows. One of the early assembly proteins it binds 23S rRNA. One of the proteins that surrounds the polypeptide exit tunnel on the outside of the ribosome. Forms the main docking site for trigger factor binding to the ribosome. The chain is Large ribosomal subunit protein uL23 from Nitrosospira multiformis (strain ATCC 25196 / NCIMB 11849 / C 71).